We begin with the raw amino-acid sequence, 31 residues long: Cytochrome b6-f complex subunit 6 (31 aa).

Residues 4 to 24 (IISYFGFLFGALTLALILFIG) form a helical membrane-spanning segment.

This sequence belongs to the PetL family. In terms of assembly, the 4 large subunits of the cytochrome b6-f complex are cytochrome b6, subunit IV (17 kDa polypeptide, PetD), cytochrome f and the Rieske protein, while the 4 small subunits are PetG, PetL, PetM and PetN. The complex functions as a dimer.

It is found in the plastid. The protein localises to the chloroplast thylakoid membrane. Component of the cytochrome b6-f complex, which mediates electron transfer between photosystem II (PSII) and photosystem I (PSI), cyclic electron flow around PSI, and state transitions. PetL is important for photoautotrophic growth as well as for electron transfer efficiency and stability of the cytochrome b6-f complex. This Physcomitrium patens (Spreading-leaved earth moss) protein is Cytochrome b6-f complex subunit 6.